Reading from the N-terminus, the 154-residue chain is U1 small nuclear ribonucleoprotein C (154 aa).

A Matrin-type zinc finger spans residues 4–36; the sequence is YYCDYCDTYLTHDSPSVRKTHCTGRKHKDNVKF.

This sequence belongs to the U1 small nuclear ribonucleoprotein C family. U1 snRNP is composed of the 7 core Sm proteins B/B', D1, D2, D3, E, F and G that assemble in a heptameric protein ring on the Sm site of the small nuclear RNA to form the core snRNP, and at least 3 U1 snRNP-specific proteins U1-70K, U1-A and U1-C. U1-C interacts with U1 snRNA and the 5' splice-site region of the pre-mRNA.

The protein resides in the nucleus. In terms of biological role, component of the spliceosomal U1 snRNP, which is essential for recognition of the pre-mRNA 5' splice-site and the subsequent assembly of the spliceosome. U1-C is directly involved in initial 5' splice-site recognition for both constitutive and regulated alternative splicing. The interaction with the 5' splice-site seems to precede base-pairing between the pre-mRNA and the U1 snRNA. Stimulates commitment or early (E) complex formation by stabilizing the base pairing of the 5' end of the U1 snRNA and the 5' splice-site region. In Aedes aegypti (Yellowfever mosquito), this protein is U1 small nuclear ribonucleoprotein C.